The following is an 878-amino-acid chain: MSKVHNSEYIKELVVDNTSYKIYDINKAASDIGLPLKKLPYSLRVLLENVLRTNGNKENLLVFKEWLKTKKSNTEIDFMPARVLMQDFTGVPAIVDLAAMRDAMQKIGCNPLKINPLIPVDLVIDHSVSVDSYGNKESFDQNVHMEMKRNIERYQFLKWGQQAFNNFKVVPPGTGICHQVNLEFLSQVVWHNDGTAYPDSLVGTDSHTTMVNGLSVLGWGVGGIEAESAMLGQPITMIIPEVIGVKLIGKLAGMATATDLVLTITEILRRKKVVGKFVEFFGNGLRNLTISDRATISNMSPEYGATCGFFPIDQETLKYLEVTGREITQIKLVEKYAIEQNLWYNCEDTQEYTEVLELDLSTVYSSLAGPKRPQDRVNLNCVASNFQNELPYFALANKDIDKKYAVANQNYAIGNGDVVIAAITSCTNTSNPSVMIGAALLAKKALEHGLNVKPWVKTSLAPGSKVVTEYLKLSGLDKYLDALGFNLVGYGCTTCIGNSGSLNPEIENTINKNRLVVASVLSGNRNFEGRINPLTKASYLASPILVVAYALSGTLNIDLTNTPIGANIYLKDIWPSQKEIDEVIANSINSSMFIEKYADVFNGTKEWRDLQITTGTNYNWDKNSTYINNPPYFDNIGSEHSIKDIKSARILAIFGDSITTDHISPAGSISKNSPAAKYLIKHHIEPLDFNSYGSRRGNHEVMMRGTFANIRIKNEMCNGVEGGFTINQLSGVQQTIYDTAMDYKAHDIPLVIFAGKEYGSGSSRDWAAKGPGLLGIKAVIAESFERIHRSNLVGMGILPLTFTGKNTRLNLKLDGSEIIDLIGLSENIKPYNLVKCVIKKQTNEISTIDLILQIFTENEINYIKHGSIMQFVVESLKG.

[4Fe-4S] cluster-binding residues include Cys-426, Cys-492, and Cys-495.

Belongs to the aconitase/IPM isomerase family. As to quaternary structure, monomer. It depends on [4Fe-4S] cluster as a cofactor.

The catalysed reaction is citrate = D-threo-isocitrate. It catalyses the reaction (2S,3R)-3-hydroxybutane-1,2,3-tricarboxylate = 2-methyl-cis-aconitate + H2O. The protein operates within carbohydrate metabolism; tricarboxylic acid cycle; isocitrate from oxaloacetate: step 2/2. It functions in the pathway organic acid metabolism; propanoate degradation. In terms of biological role, involved in the catabolism of short chain fatty acids (SCFA) via the tricarboxylic acid (TCA)(acetyl degradation route) and probably the 2-methylcitrate cycle I (propionate degradation route). Catalyzes the reversible isomerization of citrate to isocitrate via cis-aconitate. Could catalyze the hydration of 2-methyl-cis-aconitate to yield (2R,3S)-2-methylisocitrate. The apo form of AcnA functions as a RNA-binding regulatory protein. This Rickettsia prowazekii (strain Madrid E) protein is Aconitate hydratase A (acnA).